Here is a 321-residue protein sequence, read N- to C-terminus: Cytochrome c biogenesis protein CcsA (321 aa).

8 consecutive transmembrane segments (helical) span residues 17 to 37 (IVSI…IVGL), 43 to 63 (KGMI…WIYS), 71 to 91 (LYES…VPKI), 98 to 118 (LSAI…SGLL), 143 to 163 (MVLS…LLVI), 225 to 245 (VISL…VWAN), 258 to 275 (ETWA…LHTR), and 286 to 306 (AIVA…VNLL).

This sequence belongs to the CcmF/CycK/Ccl1/NrfE/CcsA family. As to quaternary structure, may interact with Ccs1.

The protein localises to the plastid. Its subcellular location is the chloroplast thylakoid membrane. Functionally, required during biogenesis of c-type cytochromes (cytochrome c6 and cytochrome f) at the step of heme attachment. In Platanus occidentalis (Sycamore), this protein is Cytochrome c biogenesis protein CcsA.